The following is a 450-amino-acid chain: Trigger factor (450 aa).

A PPIase FKBP-type domain is found at 161 to 246 (GDRVVIDFKG…VKTVEAPEYP (86 aa)). The segment at 422 to 450 (PMSLQELMSPQQPEAESAEGESKQDETKE) is disordered. Residues 441–450 (GESKQDETKE) are compositionally biased toward basic and acidic residues.

This sequence belongs to the FKBP-type PPIase family. Tig subfamily.

Its subcellular location is the cytoplasm. It catalyses the reaction [protein]-peptidylproline (omega=180) = [protein]-peptidylproline (omega=0). Functionally, involved in protein export. Acts as a chaperone by maintaining the newly synthesized protein in an open conformation. Functions as a peptidyl-prolyl cis-trans isomerase. The polypeptide is Trigger factor (Alkalilimnicola ehrlichii (strain ATCC BAA-1101 / DSM 17681 / MLHE-1)).